A 619-amino-acid polypeptide reads, in one-letter code: Type VI secretion system component TssF1 (619 aa).

In terms of assembly, interacts with TssA1.

Core component of the H1 type VI (H1-T6SS) secretion system that plays a role in the release of toxins targeting both eukaryotic and prokaryotic species. This Pseudomonas aeruginosa (strain ATCC 15692 / DSM 22644 / CIP 104116 / JCM 14847 / LMG 12228 / 1C / PRS 101 / PAO1) protein is Type VI secretion system component TssF1.